Here is a 416-residue protein sequence, read N- to C-terminus: Tyrosine--tRNA ligase (416 aa).

Residue tyrosine 40 participates in L-tyrosine binding. The short motif at 45 to 54 (ATAASLHVGH) is the 'HIGH' region element. Tyrosine 177 and glutamine 181 together coordinate L-tyrosine. A 'KMSKS' region motif is present at residues 237–241 (KMGKS). Residue lysine 240 coordinates ATP. One can recognise an S4 RNA-binding domain in the interval 351–416 (LSVAHFLVAA…RKKHKLVRLS (66 aa)).

It belongs to the class-I aminoacyl-tRNA synthetase family. TyrS type 1 subfamily. As to quaternary structure, homodimer.

The protein localises to the cytoplasm. It catalyses the reaction tRNA(Tyr) + L-tyrosine + ATP = L-tyrosyl-tRNA(Tyr) + AMP + diphosphate + H(+). Catalyzes the attachment of tyrosine to tRNA(Tyr) in a two-step reaction: tyrosine is first activated by ATP to form Tyr-AMP and then transferred to the acceptor end of tRNA(Tyr). In Cereibacter sphaeroides (strain ATCC 17029 / ATH 2.4.9) (Rhodobacter sphaeroides), this protein is Tyrosine--tRNA ligase.